Reading from the N-terminus, the 130-residue chain is Fluoride-specific ion channel FluC (130 aa).

4 helical membrane passes run 2–22 (GLLL…RFAL), 35–55 (IGIL…AAFL), 72–92 (LFVT…LDIL), and 107–127 (ILVS…FIMG). Positions 79 and 82 each coordinate Na(+).

The protein belongs to the fluoride channel Fluc/FEX (TC 1.A.43) family.

The protein resides in the cell inner membrane. The catalysed reaction is fluoride(in) = fluoride(out). Its activity is regulated as follows. Na(+) is not transported, but it plays an essential structural role and its presence is essential for fluoride channel function. In terms of biological role, fluoride-specific ion channel. Important for reducing fluoride concentration in the cell, thus reducing its toxicity. This chain is Fluoride-specific ion channel FluC, found in Francisella philomiragia subsp. philomiragia (strain ATCC 25017 / CCUG 19701 / FSC 153 / O#319-036).